Consider the following 144-residue polypeptide: Small ribosomal subunit protein eS19A (144 aa).

The segment at 83–102 (VNRGMRPSHHRDGSGSVQRK) is disordered.

This sequence belongs to the eukaryotic ribosomal protein eS19 family. In terms of assembly, component of the small ribosomal subunit (SSU). Mature yeast ribosomes consist of a small (40S) and a large (60S) subunit. The 40S small subunit contains 1 molecule of ribosomal RNA (18S rRNA) and at least 33 different proteins. The large 60S subunit contains 3 rRNA molecules (25S, 5.8S and 5S rRNA) and at least 46 different proteins.

The protein resides in the cytoplasm. Its subcellular location is the nucleus. The protein localises to the nucleolus. In terms of biological role, component of the ribosome, a large ribonucleoprotein complex responsible for the synthesis of proteins in the cell. The small ribosomal subunit (SSU) binds messenger RNAs (mRNAs) and translates the encoded message by selecting cognate aminoacyl-transfer RNA (tRNA) molecules. The large subunit (LSU) contains the ribosomal catalytic site termed the peptidyl transferase center (PTC), which catalyzes the formation of peptide bonds, thereby polymerizing the amino acids delivered by tRNAs into a polypeptide chain. The nascent polypeptides leave the ribosome through a tunnel in the LSU and interact with protein factors that function in enzymatic processing, targeting, and the membrane insertion of nascent chains at the exit of the ribosomal tunnel. eS19 is required for proper maturation of the small (40S) ribosomal subunit. Binds to 40S pre-ribosomal particles, probably required after association of NOC4 but before association of ENP1, TSR1 and RIO2 with 20/21S pre-rRNA. This is Small ribosomal subunit protein eS19A (rps1901) from Schizosaccharomyces pombe (strain 972 / ATCC 24843) (Fission yeast).